The sequence spans 337 residues: Holliday junction branch migration complex subunit RuvB (337 aa).

Residues 4–184 (QDRIISAELK…FGIVQRLEFY (181 aa)) are large ATPase domain (RuvB-L). ATP is bound by residues Ile23, Arg24, Gly65, Lys68, Thr69, Thr70, 131–133 (EDY), Arg174, Tyr184, and Arg221. Residue Thr69 participates in Mg(2+) binding. The interval 185–255 (DVESLTTIVA…VAQRALDMLS (71 aa)) is small ATPAse domain (RuvB-S). A head domain (RuvB-H) region spans residues 258 to 337 (SQGFDHLDRR…FNYQLPSDFK (80 aa)). Residues Arg313 and Arg318 each coordinate DNA.

This sequence belongs to the RuvB family. Homohexamer. Forms an RuvA(8)-RuvB(12)-Holliday junction (HJ) complex. HJ DNA is sandwiched between 2 RuvA tetramers; dsDNA enters through RuvA and exits via RuvB. An RuvB hexamer assembles on each DNA strand where it exits the tetramer. Each RuvB hexamer is contacted by two RuvA subunits (via domain III) on 2 adjacent RuvB subunits; this complex drives branch migration. In the full resolvosome a probable DNA-RuvA(4)-RuvB(12)-RuvC(2) complex forms which resolves the HJ.

Its subcellular location is the cytoplasm. It carries out the reaction ATP + H2O = ADP + phosphate + H(+). Its function is as follows. The RuvA-RuvB-RuvC complex processes Holliday junction (HJ) DNA during genetic recombination and DNA repair, while the RuvA-RuvB complex plays an important role in the rescue of blocked DNA replication forks via replication fork reversal (RFR). RuvA specifically binds to HJ cruciform DNA, conferring on it an open structure. The RuvB hexamer acts as an ATP-dependent pump, pulling dsDNA into and through the RuvAB complex. RuvB forms 2 homohexamers on either side of HJ DNA bound by 1 or 2 RuvA tetramers; 4 subunits per hexamer contact DNA at a time. Coordinated motions by a converter formed by DNA-disengaged RuvB subunits stimulates ATP hydrolysis and nucleotide exchange. Immobilization of the converter enables RuvB to convert the ATP-contained energy into a lever motion, pulling 2 nucleotides of DNA out of the RuvA tetramer per ATP hydrolyzed, thus driving DNA branch migration. The RuvB motors rotate together with the DNA substrate, which together with the progressing nucleotide cycle form the mechanistic basis for DNA recombination by continuous HJ branch migration. Branch migration allows RuvC to scan DNA until it finds its consensus sequence, where it cleaves and resolves cruciform DNA. The polypeptide is Holliday junction branch migration complex subunit RuvB (Marinomonas sp. (strain MWYL1)).